A 173-amino-acid polypeptide reads, in one-letter code: Co-chaperone protein HscB homolog (173 aa).

Positions 5–77 (CHFALFELKP…PKRARYLLAM (73 aa)) constitute a J domain.

Belongs to the HscB family. Interacts with HscA and stimulates its ATPase activity.

Functionally, co-chaperone involved in the maturation of iron-sulfur cluster-containing proteins. Seems to help targeting proteins to be folded toward HscA. This Pseudomonas syringae pv. tomato (strain ATCC BAA-871 / DC3000) protein is Co-chaperone protein HscB homolog.